Here is a 624-residue protein sequence, read N- to C-terminus: Kelch-like protein diablo (624 aa).

The interval 1 to 55 is disordered; sequence MGDPLLPGSTGLGSGSATAATGGSVTAGSGLGNGGTGGAERPPSPARLTHTSEKH. Over residues 15–28 the composition is skewed to low complexity; the sequence is GSATAATGGSVTAG. Over residues 29 to 38 the composition is skewed to gly residues; sequence SGLGNGGTGG. The region spanning 73-140 is the BTB domain; that stretch reads CDVVLNVGGR…CYTAHIIVEE (68 aa). The BACK domain occupies 175 to 277; that stretch reads CLGIRAFADT…SPKFLVGTVG (103 aa). Kelch repeat units follow at residues 324 to 370, 372 to 418, 419 to 465, 467 to 512, 514 to 559, and 560 to 606; these read VLFA…VLND, LYAV…VLDG, FLYA…VLSG, LYAI…VFNN, IYAV…VVNG, and QLYA…VMRA.

The protein operates within protein modification; protein ubiquitination. Probable substrate-specific adapter of an E3 ubiquitin-protein ligase complex which mediates the ubiquitination and subsequent proteasomal degradation of target proteins. May have a role in synapse differentiation and growth. In Drosophila grimshawi (Hawaiian fruit fly), this protein is Kelch-like protein diablo.